A 359-amino-acid chain; its full sequence is Phosphoserine aminotransferase (359 aa).

Arginine 41 contributes to the L-glutamate binding site. Pyridoxal 5'-phosphate-binding residues include tryptophan 101, threonine 151, aspartate 170, and glutamine 193. Lysine 194 bears the N6-(pyridoxal phosphate)lysine mark. 235–236 lines the pyridoxal 5'-phosphate pocket; it reads NT.

This sequence belongs to the class-V pyridoxal-phosphate-dependent aminotransferase family. SerC subfamily. Homodimer. Pyridoxal 5'-phosphate serves as cofactor.

It is found in the cytoplasm. It catalyses the reaction O-phospho-L-serine + 2-oxoglutarate = 3-phosphooxypyruvate + L-glutamate. The enzyme catalyses 4-(phosphooxy)-L-threonine + 2-oxoglutarate = (R)-3-hydroxy-2-oxo-4-phosphooxybutanoate + L-glutamate. Its pathway is amino-acid biosynthesis; L-serine biosynthesis; L-serine from 3-phospho-D-glycerate: step 2/3. The protein operates within cofactor biosynthesis; pyridoxine 5'-phosphate biosynthesis; pyridoxine 5'-phosphate from D-erythrose 4-phosphate: step 3/5. Its function is as follows. Catalyzes the reversible conversion of 3-phosphohydroxypyruvate to phosphoserine and of 3-hydroxy-2-oxo-4-phosphonooxybutanoate to phosphohydroxythreonine. The protein is Phosphoserine aminotransferase of Laribacter hongkongensis (strain HLHK9).